A 175-amino-acid polypeptide reads, in one-letter code: RNA pyrophosphohydrolase (175 aa).

Residues 8-159 (PYRTCVGMML…KRPVYERVVK (152 aa)) form the Nudix hydrolase domain. A Nudix box motif is present at residues 47 to 68 (GGVDPGEDPWTAAKRELYEETS).

The protein belongs to the Nudix hydrolase family. RppH subfamily. Requires a divalent metal cation as cofactor.

Accelerates the degradation of transcripts by removing pyrophosphate from the 5'-end of triphosphorylated RNA, leading to a more labile monophosphorylated state that can stimulate subsequent ribonuclease cleavage. The chain is RNA pyrophosphohydrolase from Rhodopseudomonas palustris (strain BisB18).